A 420-amino-acid chain; its full sequence is Reticulon-4 receptor-like 2 (420 aa).

An N-terminal signal peptide occupies residues 1–30 (MLPGLRRLLQGPASACLLLTLLALPPVTPS). Cystine bridges form between Cys31/Cys37 and Cys35/Cys46. The LRRNT domain maps to 31 to 60 (CPMLCTCYSSPPTVSCQANNFSSVPLSLPP). An N-linked (GlcNAc...) asparagine glycan is attached at Asn50. LRR repeat units lie at residues 61–82 (STQR…TFGP), 83–104 (NLLT…TFRH), 107–129 (ALEE…TFQG), 132–153 (RLQS…IFRG), 156–177 (SLQY…LFAD), 180–201 (NLSH…VFRG), 204–225 (SLDR…AFHG), and 228–249 (RLTI…ALAD). An N-linked (GlcNAc...) asparagine glycan is attached at Asn93. Asn236 carries N-linked (GlcNAc...) asparagine glycosylation. In terms of domain architecture, LRRCT spans 261 to 312 (NPWACDCRARPLWAWFQRARVSSSDVTCATPPERQGRDLRTLRDTDFQACPP). 2 cysteine pairs are disulfide-bonded: Cys265/Cys288 and Cys267/Cys310. Positions 286-390 (VTCATPPERQ…GEQTCPGAAC (105 aa)) are disordered. A compositionally biased stretch (basic and acidic residues) spans 294-306 (RQGRDLRTLRDTD). Positions 315-327 (PTRPGSRARGNSS) are important for interaction with MAG. Basic and acidic residues predominate over residues 351–360 (LPAEDSRGRQ). Cys390 is lipidated: GPI-anchor amidated cysteine. Positions 391-420 (QAPADSRGPVLSAGLRTPLLCLLLLAPHHL) are cleaved as a propeptide — removed in mature form.

This sequence belongs to the Nogo receptor family. As to quaternary structure, interaction with MAG is controversial, and may be indirect. Interacts with MAG. Does not interact with OMG and RTN4. In terms of processing, undergoes zinc metalloproteinase-mediated ectodomain shedding in neuroblastoma cells; is released both as a full-length ectodomain and an N-terminal fragment containing the leucine-rich repeat (LRR) region of the protein. Post-translationally, N-glycosylated. O-glycosylated. Contains terminal sialic acid groups on its glycan chains. In terms of tissue distribution, detected in adult brain, in neocortex, hippocampus, striatum and dorsal root ganglion neurons, and in retina (at protein level). In brain, detected in cerebral cortex and hippocampus. Weak or no expression detected in the cerebellum, thalamus or striatum.

The protein resides in the cell membrane. It localises to the cell projection. It is found in the dendrite. The protein localises to the perikaryon. Its subcellular location is the axon. The protein resides in the membrane raft. Functionally, cell surface receptor that plays a functionally redundant role in the inhibition of neurite outgrowth mediated by MAG. Plays a functionally redundant role in postnatal brain development. Contributes to normal axon migration across the brain midline and normal formation of the corpus callosum. Does not seem to play a significant role in regulating axon regeneration in the adult central nervous system. Protects motoneurons against apoptosis; protection against apoptosis is probably mediated by MAG. Like other family members, plays a role in restricting the number dendritic spines and the number of synapses that are formed during brain development. Signaling mediates activation of Rho and downstream reorganization of the actin cytoskeleton. This chain is Reticulon-4 receptor-like 2, found in Rattus norvegicus (Rat).